The sequence spans 893 residues: cGMP-specific 3',5'-cyclic phosphodiesterase (893 aa).

2 GAF domains span residues aspartate 21–isoleucine 173 and asparagine 205–isoleucine 390. The region spanning glycine 420 to valine 743 is the PDEase domain. Histidine 496 functions as the Proton donor in the catalytic mechanism. The a divalent metal cation site is built by histidine 500, histidine 536, aspartate 537, and aspartate 647. Disordered stretches follow at residues glutamine 784–isoleucine 807 and histidine 844–leucine 893. 2 stretches are compositionally biased toward basic and acidic residues: residues glycine 789 to arginine 800 and histidine 844 to serine 853. The span at serine 864–valine 880 shows a compositional bias: low complexity. Basic residues predominate over residues serine 883–leucine 893. Cysteine 890 carries the post-translational modification Cysteine methyl ester. Cysteine 890 is lipidated: S-farnesyl cysteine. Residues alanine 891–leucine 893 constitute a propeptide, removed in mature form.

It belongs to the cyclic nucleotide phosphodiesterase family. Interacts with PrBP. The cofactor is a divalent metal cation.

It localises to the cell membrane. It catalyses the reaction 3',5'-cyclic GMP + H2O = GMP + H(+). In terms of biological role, has a role regulating cGMP transport in Malpighian tubule principal cells. This Drosophila virilis (Fruit fly) protein is cGMP-specific 3',5'-cyclic phosphodiesterase.